The chain runs to 840 residues: Protein translocase subunit SecA (840 aa).

ATP contacts are provided by residues Q87, 105 to 109 (GEGKT), and D494. Residues 518 to 537 (RRIDNQLRGRSGRQGDPGSS) form a disordered region. Positions 826, 828, 837, and 838 each coordinate Zn(2+).

It belongs to the SecA family. Monomer and homodimer. Part of the essential Sec protein translocation apparatus which comprises SecA, SecYEG and auxiliary proteins SecDF-YajC and YidC. Zn(2+) serves as cofactor.

The protein resides in the cell inner membrane. The protein localises to the cytoplasm. It carries out the reaction ATP + H2O + cellular proteinSide 1 = ADP + phosphate + cellular proteinSide 2.. Functionally, part of the Sec protein translocase complex. Interacts with the SecYEG preprotein conducting channel. Has a central role in coupling the hydrolysis of ATP to the transfer of proteins into and across the cell membrane, serving as an ATP-driven molecular motor driving the stepwise translocation of polypeptide chains across the membrane. The sequence is that of Protein translocase subunit SecA from Desulforapulum autotrophicum (strain ATCC 43914 / DSM 3382 / VKM B-1955 / HRM2) (Desulfobacterium autotrophicum).